Consider the following 449-residue polypeptide: Exodeoxyribonuclease 7 large subunit (449 aa).

Belongs to the XseA family. Heterooligomer composed of large and small subunits.

The protein resides in the cytoplasm. It catalyses the reaction Exonucleolytic cleavage in either 5'- to 3'- or 3'- to 5'-direction to yield nucleoside 5'-phosphates.. In terms of biological role, bidirectionally degrades single-stranded DNA into large acid-insoluble oligonucleotides, which are then degraded further into small acid-soluble oligonucleotides. The sequence is that of Exodeoxyribonuclease 7 large subunit from Salmonella heidelberg (strain SL476).